The following is a 231-amino-acid chain: Somatolactin (231 aa).

The signal sequence occupies residues 1 to 24 (MLMFTAIQRGVWVALLWPHLLTAS). Cystine bridges form between Cys-29-Cys-39, Cys-89-Cys-205, and Cys-222-Cys-230. Asn-35 and Asn-145 each carry an N-linked (GlcNAc...) asparagine glycan.

It belongs to the somatotropin/prolactin family. In terms of tissue distribution, pituitary gland.

The protein localises to the secreted. This chain is Somatolactin, found in Siganus guttatus (Orange-spotted spinefoot).